The following is a 187-amino-acid chain: Pyridoxal 5'-phosphate synthase subunit PdxT (187 aa).

Gly47–Ser49 serves as a coordination point for L-glutamine. Catalysis depends on Cys76, which acts as the Nucleophile. Residues Arg102 and Ile128–Arg129 each bind L-glutamine. Active-site charge relay system residues include His165 and Glu167.

It belongs to the glutaminase PdxT/SNO family. In terms of assembly, in the presence of PdxS, forms a dodecamer of heterodimers. Only shows activity in the heterodimer.

The enzyme catalyses aldehydo-D-ribose 5-phosphate + D-glyceraldehyde 3-phosphate + L-glutamine = pyridoxal 5'-phosphate + L-glutamate + phosphate + 3 H2O + H(+). It catalyses the reaction L-glutamine + H2O = L-glutamate + NH4(+). It participates in cofactor biosynthesis; pyridoxal 5'-phosphate biosynthesis. Its function is as follows. Catalyzes the hydrolysis of glutamine to glutamate and ammonia as part of the biosynthesis of pyridoxal 5'-phosphate. The resulting ammonia molecule is channeled to the active site of PdxS. This Methanococcus maripaludis (strain DSM 14266 / JCM 13030 / NBRC 101832 / S2 / LL) protein is Pyridoxal 5'-phosphate synthase subunit PdxT.